The chain runs to 616 residues: Spastin (616 aa).

Positions methionine 1–serine 44 are disordered. Residues methionine 1 to leucine 50 form a required for nuclear localization region. Topologically, residues methionine 1–proline 56 are cytoplasmic. Positions methionine 1 to glutamine 80 are required for interaction with ATL1. Residues methionine 1 to leucine 194 are required for midbody localization. The interval methionine 1–lysine 300 is required for interaction with RTN1. A Nuclear localization signal motif is present at residues proline 4–lysine 11. Composition is skewed to pro residues over residues serine 18–cysteine 28 and alanine 35–serine 44. Positions leucine 50–methionine 87 are required for interaction with SSNA1 and microtubules. The helical intramembrane region spans leucine 57–tryptophan 77. The Nuclear export signal signature appears at leucine 59 to valine 67. Residues leucine 78 to valine 616 are Cytoplasmic-facing. The tract at residues glutamate 112 to glutamate 196 is sufficient for interaction with CHMP1B. The segment at glutamate 114–proline 200 is required for interaction with microtubules. The MIT domain occupies histidine 120–leucine 195. The tract at residues glycine 223–alanine 266 is disordered. The segment at glutamine 226 to isoleucine 328 is sufficient for interaction with microtubules. The tract at residues glutamate 228 to valine 616 is sufficient for microtubule severing. A phosphoserine mark is found at serine 245 and serine 268. A required for interaction with microtubules and microtubule severing region spans residues serine 270–isoleucine 328. The tract at residues methionine 278 to lysine 311 is disordered. The segment covering glycine 283–threonine 306 has biased composition (polar residues). Threonine 306 is modified (phosphothreonine). Positions arginine 309 to lysine 312 match the Nuclear localization signal motif. The interval lysine 310–lysine 312 is required for interaction with microtubules. Glycine 382–threonine 389 contacts ATP. Serine 597 carries the post-translational modification Phosphoserine.

The protein belongs to the AAA ATPase family. Spastin subfamily. In terms of assembly, homohexamer. Mostly monomeric, but assembles into hexameric structure for short periods of time. Oligomerization seems to be a prerequisite for catalytic activity. Binding to ATP in a cleft between two adjacent subunits stabilizes the homohexameric form. Binds to microtubules at least in part via the alpha-tubulin and beta-tubulin tails. The hexamer adopts a ring conformation through which microtubules pass prior to being severed. Does not interact strongly with tubulin heterodimers. Interacts (via MIT domain) with CHMP1B; the interaction is direct. Interacts with SSNA1. Interacts with ATL1. Interacts with RTN1. Interacts with ZFYVE27. Interacts with REEP1. Interacts (via MIT domain) with IST1.

It is found in the membrane. The protein localises to the endoplasmic reticulum. It localises to the midbody. The protein resides in the cytoplasm. Its subcellular location is the cytoskeleton. It is found in the microtubule organizing center. The protein localises to the centrosome. It localises to the perinuclear region. The protein resides in the nucleus. Its subcellular location is the spindle. It is found in the cell projection. The protein localises to the axon. It catalyses the reaction n ATP + n H2O + a microtubule = n ADP + n phosphate + (n+1) alpha/beta tubulin heterodimers.. Allosteric enzyme with a cooperative mechanism; at least two neighbor subunits influence each other strongly in spastin hexamers. Microtubule binding promotes cooperative interactions among spastin subunits. In terms of biological role, ATP-dependent microtubule severing protein that specifically recognizes and cuts microtubules that are polyglutamylated. Preferentially recognizes and acts on microtubules decorated with short polyglutamate tails: severing activity increases as the number of glutamates per tubulin rises from one to eight, but decreases beyond this glutamylation threshold. Severing activity is not dependent on tubulin acetylation or detyrosination. Microtubule severing promotes reorganization of cellular microtubule arrays and the release of microtubules from the centrosome following nucleation. It is critical for the biogenesis and maintenance of complex microtubule arrays in axons, spindles and cilia. SPAST is involved in abscission step of cytokinesis and nuclear envelope reassembly during anaphase in cooperation with the ESCRT-III complex. Recruited at the midbody, probably by IST1, and participates in membrane fission during abscission together with the ESCRT-III complex. Recruited to the nuclear membrane by IST1 and mediates microtubule severing, promoting nuclear envelope sealing and mitotic spindle disassembly during late anaphase. Required for membrane traffic from the endoplasmic reticulum (ER) to the Golgi and endosome recycling. Recruited by IST1 to endosomes and regulates early endosomal tubulation and recycling by mediating microtubule severing. Probably plays a role in axon growth and the formation of axonal branches. This is Spastin from Sus scrofa (Pig).